The primary structure comprises 77 residues: Chassatide C13 (77 aa).

A signal peptide spans 1–24 (MAKFATQLLLFVLIASLVMLEVHA). The propeptide at 25-44 (SNTFQVPDLGKRLLMNRDPN) is removed in mature form. The segment at residues 45-75 (GFPCAESCVYIPCTVTALLGCSCRNRVCYRN) is a cross-link (cyclopeptide (Gly-Asn)). Intrachain disulfides connect C48-C65, C52-C67, and C57-C72. Residues 76-77 (EL) constitute a propeptide, removed in mature form.

In terms of processing, this is a cyclic peptide. Expressed in fruit and pedicel but not in root, leaf and stem (at protein level).

In terms of biological role, probably participates in a plant defense mechanism. This is Chassatide C13 from Chassalia chartacea (Chassalia curviflora).